A 126-amino-acid polypeptide reads, in one-letter code: Large ribosomal subunit protein bL17 (126 aa).

The protein belongs to the bacterial ribosomal protein bL17 family. In terms of assembly, part of the 50S ribosomal subunit. Contacts protein L32.

In Magnetococcus marinus (strain ATCC BAA-1437 / JCM 17883 / MC-1), this protein is Large ribosomal subunit protein bL17.